A 329-amino-acid polypeptide reads, in one-letter code: Glycerol-3-phosphate dehydrogenase [NAD(P)+] (329 aa).

The NADPH site is built by Trp-15, His-35, and Lys-107. Residues Lys-107, Gly-135, and Ser-137 each coordinate sn-glycerol 3-phosphate. Residue Ala-139 coordinates NADPH. The sn-glycerol 3-phosphate site is built by Lys-190, Asp-243, Ser-253, Arg-254, and Asn-255. Residue Lys-190 is the Proton acceptor of the active site. Arg-254 lines the NADPH pocket. Residues Leu-276 and Glu-278 each coordinate NADPH.

The protein belongs to the NAD-dependent glycerol-3-phosphate dehydrogenase family.

It is found in the cytoplasm. It catalyses the reaction sn-glycerol 3-phosphate + NAD(+) = dihydroxyacetone phosphate + NADH + H(+). The enzyme catalyses sn-glycerol 3-phosphate + NADP(+) = dihydroxyacetone phosphate + NADPH + H(+). Its pathway is membrane lipid metabolism; glycerophospholipid metabolism. In terms of biological role, catalyzes the reduction of the glycolytic intermediate dihydroxyacetone phosphate (DHAP) to sn-glycerol 3-phosphate (G3P), the key precursor for phospholipid synthesis. In Rhodopseudomonas palustris (strain HaA2), this protein is Glycerol-3-phosphate dehydrogenase [NAD(P)+].